The primary structure comprises 451 residues: Tubulin alpha-1 chain (451 aa).

Gln-11 contacts GTP. Lys-40 is modified (N6-acetyllysine). The GTP site is built by Glu-71, Gly-144, Thr-145, Thr-179, Asn-206, and Asn-228. Residue Glu-71 coordinates Mg(2+). The active site involves Glu-254.

Belongs to the tubulin family. Dimer of alpha and beta chains. A typical microtubule is a hollow water-filled tube with an outer diameter of 25 nm and an inner diameter of 15 nM. Alpha-beta heterodimers associate head-to-tail to form protofilaments running lengthwise along the microtubule wall with the beta-tubulin subunit facing the microtubule plus end conferring a structural polarity. Microtubules usually have 13 protofilaments but different protofilament numbers can be found in some organisms and specialized cells. Mg(2+) is required as a cofactor. In terms of processing, undergoes a tyrosination/detyrosination cycle, the cyclic removal and re-addition of a C-terminal tyrosine residue by the enzymes tubulin tyrosine carboxypeptidase (TTCP) and tubulin tyrosine ligase (TTL), respectively. Post-translationally, acetylation of alpha chains at Lys-40 stabilizes microtubules and affects affinity and processivity of microtubule motors. This modification has a role in multiple cellular functions, ranging from cell motility, cell cycle progression or cell differentiation to intracellular trafficking and signaling.

Its subcellular location is the cytoplasm. It localises to the cytoskeleton. The enzyme catalyses GTP + H2O = GDP + phosphate + H(+). Functionally, tubulin is the major constituent of microtubules, a cylinder consisting of laterally associated linear protofilaments composed of alpha- and beta-tubulin heterodimers. Microtubules grow by the addition of GTP-tubulin dimers to the microtubule end, where a stabilizing cap forms. Below the cap, tubulin dimers are in GDP-bound state, owing to GTPase activity of alpha-tubulin. The sequence is that of Tubulin alpha-1 chain (TUBA1) from Eleusine indica (Goosegrass).